The sequence spans 491 residues: Cobyric acid synthase (491 aa).

The GATase cobBQ-type domain occupies 250–441; that stretch reads DLQITVVRLP…LHGLFDNGPW (192 aa). Cys-331 acts as the Nucleophile in catalysis. His-433 is a catalytic residue.

The protein belongs to the CobB/CobQ family. CobQ subfamily.

It participates in cofactor biosynthesis; adenosylcobalamin biosynthesis. Functionally, catalyzes amidations at positions B, D, E, and G on adenosylcobyrinic A,C-diamide. NH(2) groups are provided by glutamine, and one molecule of ATP is hydrogenolyzed for each amidation. The polypeptide is Cobyric acid synthase (Trichormus variabilis (strain ATCC 29413 / PCC 7937) (Anabaena variabilis)).